The sequence spans 323 residues: L-lactate dehydrogenase 1 (323 aa).

Residues valine 18, aspartate 39, tyrosine 69, and 83 to 84 (GA) each bind NAD(+). Substrate is bound by residues glutamine 86 and arginine 92. Residues serine 105, 122 to 124 (VAN), and serine 147 each bind NAD(+). 124–127 (NPVD) serves as a coordination point for substrate. A substrate-binding site is contributed by 152–155 (DTGR). The Proton acceptor role is filled by histidine 179. The residue at position 223 (tyrosine 223) is a Phosphotyrosine. A substrate-binding site is contributed by threonine 232.

It belongs to the LDH/MDH superfamily. LDH family. As to quaternary structure, homotetramer.

The protein resides in the cytoplasm. The enzyme catalyses (S)-lactate + NAD(+) = pyruvate + NADH + H(+). Its pathway is fermentation; pyruvate fermentation to lactate; (S)-lactate from pyruvate: step 1/1. Its function is as follows. Catalyzes the conversion of lactate to pyruvate. The polypeptide is L-lactate dehydrogenase 1 (Lactobacillus acidophilus (strain ATCC 700396 / NCK56 / N2 / NCFM)).